The following is a 309-amino-acid chain: Verprolin (309 aa).

The span at 1-13 (MAPAPPPPPPAPA) shows a compositional bias: pro residues. The tract at residues 1–273 (MAPAPPPPPP…PNRVDDHGRF (273 aa)) is disordered. Residues 27–44 (DRSALLNSIQKGKKLKKA) enclose the WH2 domain. The segment covering 82–91 (LPTSSNNTQQ) has biased composition (polar residues). Residues 141–207 (TSAPPRPSIP…PPKVPPPPLS (67 aa)) are compositionally biased toward pro residues.

Belongs to the verprolin family. In terms of assembly, interacts with wsp1. Interacts with myo1 (via SH3 domain). Interacts with actin monomers.

The protein resides in the cytoplasm. The protein localises to the cytoskeleton. Involved in cytoskeletal organization and cellular growth. May exert its effects on the cytoskeleton directly, or indirectly via proline-binding proteins such as profilin or proteins possessing SH3 domains. Plays a role in actin patch assembly by enhancing the ability of myo1 to stimulate actin polymerization by the Arp2/3 complex. The protein is Verprolin of Schizosaccharomyces pombe (strain 972 / ATCC 24843) (Fission yeast).